Here is a 73-residue protein sequence, read N- to C-terminus: U3-agatoxin-Ao1e (73 aa).

A signal peptide spans M1–A20. The propeptide occupies I21 to R34. Disulfide bonds link C36–C52, C43–C57, C51–C67, and C59–C65. An Asparagine amide modification is found at N71.

It belongs to the neurotoxin 07 (Beta/delta-agtx) family. 03 (aga-4) subfamily. Aga sub-subfamily. In terms of tissue distribution, expressed by the venom gland.

It is found in the secreted. Its function is as follows. Insecticidal neurotoxin that induces an irreversible spastic paralysis when injected into insects. Modifies presynaptic voltage-gated sodium channels (Nav), causing them to open at the normal resting potential of the nerve. This leads to spontaneous release of neurotransmitter and repetitive action potentials in motor neurons. The chain is U3-agatoxin-Ao1e from Agelena orientalis (Funnel-web spider).